A 622-amino-acid chain; its full sequence is MRPKLLSVEAALFLALPELARAATRKFDFEIGWVRANPDNAFERPVIGINGQWPIPTIEVDIGDRVIINAHNNLGNQSTSLHFHGLYMNGSTHMDGPAGVSQCPIIPGTSFTYNFTVDQPGTYWYHSHTAAQYPDGLRGPFIVHDKDFPYAKKYDEEVVLTLSDWYHDEMRSLIPQFMAKSNPSGAEPVPKNALMNETTNFTMSVQPEKTYLFRVINVGAFAGQYLWFEGHKMQIVEVDGIYTEEAEAEMIYISAAQRVSFLLTTKKDTSKNFPIVASMDTTLFDVLPPDLKYNSTGWLVYDKKAEKPVPATVDSLNPFDDMTLVPYDKMEILGKPDKEVVLDVKMDNLKDGKNYAFFNDITYTEAKVPTLYTALSAGKDAEDPAVYGTYTHSMVLKKNEIVQLVVNNLDSGRHPFHLHGHAFQSVYRSEEEAGIWADANVTEKNLPKTPMRRDTLVIYPNGNIVMRFKADNPGVWLFHCHIEWHVISGLIATFVEDPLALQETIEIPKNHLDACAAANMPTKGNAAANTEDFLDLTGENKPANTLPPGFTPRGIVALVFSCICGILGVAVVAWYGFSAPVGSTSAGALSAGLVENDSGDVHSAQKGPQETVVSPTGDARSH.

The first 22 residues, 1–22, serve as a signal peptide directing secretion; sequence MRPKLLSVEAALFLALPELARA. Topologically, residues 23 to 553 are extracellular; sequence ATRKFDFEIG…NTLPPGFTPR (531 aa). Plastocyanin-like domains lie at 31 to 146, 156 to 303, and 363 to 498; these read IGWV…VHDK, EEVV…VYDK, and YTEA…VEDP. An N-linked (GlcNAc...) asparagine glycan is attached at asparagine 76. Residues histidine 82 and histidine 84 each contribute to the Cu cation site. N-linked (GlcNAc...) asparagine glycosylation is found at asparagine 89 and asparagine 114. Histidine 126 and histidine 128 together coordinate Cu cation. Asparagine 196, asparagine 200, and asparagine 294 each carry an N-linked (GlcNAc...) asparagine glycan. Residues histidine 414, histidine 417, and histidine 419 each contribute to the Cu cation site. A glycan (N-linked (GlcNAc...) asparagine) is linked at asparagine 440. Cu cation is bound by residues histidine 479, cysteine 480, histidine 481, and histidine 485. The helical transmembrane segment at 554 to 574 threads the bilayer; it reads GIVALVFSCICGILGVAVVAW. The Cytoplasmic portion of the chain corresponds to 575-622; it reads YGFSAPVGSTSAGALSAGLVENDSGDVHSAQKGPQETVVSPTGDARSH. The disordered stretch occupies residues 597 to 622; that stretch reads DSGDVHSAQKGPQETVVSPTGDARSH.

The protein belongs to the multicopper oxidase family.

Its subcellular location is the cell membrane. Its function is as follows. Cell surface ferroxidase; part of the reductive iron assimilatory system (RIA), a siderophore-independent iron acquisition process. Required to oxidize Fe(2+) and release it from the transporter. Seems not to be involved in virulence. The protein is Iron transport multicopper oxidase FET3 of Gibberella zeae (strain ATCC MYA-4620 / CBS 123657 / FGSC 9075 / NRRL 31084 / PH-1) (Wheat head blight fungus).